A 122-amino-acid chain; its full sequence is MIQMQSYLGVADNSGAKEVMCIKVLGGSKRRYASIGDIIKVTVKEAIPRGKVKKGEVYDAVVVRTRSGVRRPDGSLIRFDGNAAVLLNNKQEPIGTRVFGPVTRELRSEKLMKIVSLAPEVL.

Belongs to the universal ribosomal protein uL14 family. In terms of assembly, part of the 50S ribosomal subunit. Forms a cluster with proteins L3 and L19. In the 70S ribosome, L14 and L19 interact and together make contacts with the 16S rRNA in bridges B5 and B8.

In terms of biological role, binds to 23S rRNA. Forms part of two intersubunit bridges in the 70S ribosome. The chain is Large ribosomal subunit protein uL14 from Xylella fastidiosa (strain 9a5c).